A 451-amino-acid polypeptide reads, in one-letter code: Scaffold protein ILK (451 aa).

Met-1 bears the N-acetylmethionine mark. ANK repeat units follow at residues 2 to 30 (DDIFTQCREGNAVAVRLWLDNTENDLNQG), 31 to 63 (DDHGFSPLHWACREGRSAVVEMLIMRGARINVM), 64 to 96 (NRGDDTPLHLAASHGHRDIVQKLLQYKADINAV), 97 to 129 (NEHGNVPLHYACFWGQDQVAEDLVANGALVSIC), and 130 to 174 (NKYG…GTTR). The segment at 33–139 (HGFSPLHWAC…NKYGEMPMDK (107 aa)) is interaction with LIMS1. A Phosphothreonine modification is found at Thr-173. A PH-like; mediates interaction with TGFB1I1 region spans residues 180 to 212 (GTLNKHSGIDFKQLNFLAKLNENHSGELWKGRW). A Phosphoserine modification is found at Ser-186. The Protein kinase domain maps to 193 to 445 (LNFLAKLNEN…PKFDMIVPIL (253 aa)). Residues Asn-200, Asn-202, His-203, and Ser-204 each contribute to the ATP site. A Phosphoserine modification is found at Ser-246. The ATP site is built by His-270, Met-272, and Asn-279. Asp-339 lines the Mg(2+) pocket. ATP is bound at residue Lys-341. A Nuclear localization signal motif is present at residues 363–371 (KKPEDTNRR). An N6-acetyllysine modification is found at Lys-425.

It belongs to the protein kinase superfamily. TKL Ser/Thr protein kinase family. As to quaternary structure, component of the heterotrimeric IPP (ILK-PINCH-PARVIN) complex composed of ILK, LIMS1/PINCH and PARVA; the complex binds to F-actin via the C-terminal tail of LIMS1 and the N-terminal region of PARVA, promoting F-actin filament bundling. Formation of the IPP complex is dependent on protein kinase C and precedes integrin-mediated cell adhesion and spreading. ILK also interacts with LIMS2/PINCH2 and with PARVB and PARVG which may substitute for LIMS1 and PARVA in the IPP complex; PARVA and PARVB compete for the same binding site. Interaction with PARVG promotes the establishment of cell polarity required for leukocyte migration. Interacts with the cytoplasmic domain of integrin ITGB1 and may also interact with integrins ITGB2, ITGB3 and/or ITGB5. Interacts probably also with TGFB1I1. Interacts (via ANK repeats) with EPHA1 (via SAM domain); stimulated by EFNA1 but independent of the kinase activity of EPHA1. Interacts with FERMT2. Interacts with LIMD2; leading to activate the protein kinase activity. Interacts with PXN/PAXILLIN (via LD motif 4). Interacts with CCDC25 (via cytoplasmic region); initiating the ILK-PARVB cascade to induce cytoskeleton rearrangement and directional migration of cells. Interacts with IQGAP1; the interaction is required for localization of IQGAP1 to the cell cortex. Phosphorylation by PAK1 modulates ILK subcellular location by promoting its nuclear export.

It is found in the cell junction. The protein localises to the focal adhesion. The protein resides in the cell membrane. It localises to the cell projection. Its subcellular location is the lamellipodium. It is found in the cytoplasm. The protein localises to the myofibril. The protein resides in the sarcomere. It localises to the nucleus. Its subcellular location is the cytoskeleton. It is found in the microtubule organizing center. The protein localises to the centrosome. The protein resides in the cell cortex. Scaffold protein which mediates protein-protein interactions during a range of cellular events including focal adhesion assembly, cell adhesion and cell migration. Regulates integrin-mediated signal transduction by contributing to inside-out integrin activation. Recruits PARVA and LIMS1/PITCH to form the heterotrimeric IPP (ILK-PINCH-PARVIN) complex which binds to F-actin via the C-terminal tail of LIMS1 and the N-terminal region of PARVA, promoting F-actin filament bundling, a process required to generate force for actin cytoskeleton reorganization and subsequent dynamic cell adhesion events such as cell spreading and migration. Binding to PARVA promotes effective assembly of ILK into focal adhesions while PARVA-bound ILK can simultaneously engage integrin-beta cytoplasmic tails to mediate cell adhesion. Plays a role with PARVG in promoting the cell adhesion and spreading of leukocytes. Acts as an upstream effector of both AKT1/PKB and GSK3. Mediates trafficking of caveolae to the cell surface in an ITGB1-dependent manner by promoting the recruitment of IQGAP1 to the cell cortex which cooperates with its effector DIAPH1 to locally stabilize microtubules and allow stable insertion of caveolae into the plasma membrane. Required for the maintenance of mitotic spindle integrity by promoting phosphorylation of TACC3 by AURKA. Associates with chromatin and may act as a negative regulator of transcription when located in the nucleus. This is Scaffold protein ILK from Cavia porcellus (Guinea pig).